A 108-amino-acid polypeptide reads, in one-letter code: Replication restart protein PriB (108 aa).

An SSB domain is found at 8-108 (VDNRFSLIGK…LHAEQIEFIE (101 aa)).

The protein belongs to the PriB family. As to quaternary structure, homodimer. Interacts with PriA and DnaT. Component of the replication restart primosome. Primosome assembly occurs via a 'hand-off' mechanism. PriA binds to replication forks, subsequently PriB then DnaT bind; DnaT then displaces ssDNA to generate the helicase loading substrate.

Functionally, involved in the restart of stalled replication forks, which reloads the replicative helicase on sites other than the origin of replication; the PriA-PriB pathway is the major replication restart pathway. During primosome assembly it facilitates complex formation between PriA and DnaT on DNA; stabilizes PriA on DNA. Stimulates the DNA unwinding activity of PriA helicase. This Histophilus somni (strain 129Pt) (Haemophilus somnus) protein is Replication restart protein PriB.